The chain runs to 272 residues: uncharacterized protein (272 aa).

K185 acts as the Schiff-base intermediate with substrate in catalysis.

This sequence belongs to the DeoC/FbaB aldolase family.

This is an uncharacterized protein from Saccharolobus solfataricus (strain ATCC 35092 / DSM 1617 / JCM 11322 / P2) (Sulfolobus solfataricus).